Consider the following 330-residue polypeptide: Methylthioribose-1-phosphate isomerase (330 aa).

Substrate-binding positions include 49 to 51, arginine 83, and glutamine 179; that span reads RGA. Aspartate 220 (proton donor) is an active-site residue. 230-231 is a binding site for substrate; that stretch reads NK.

This sequence belongs to the eIF-2B alpha/beta/delta subunits family. MtnA subfamily.

The catalysed reaction is 5-(methylsulfanyl)-alpha-D-ribose 1-phosphate = 5-(methylsulfanyl)-D-ribulose 1-phosphate. Its pathway is amino-acid biosynthesis; L-methionine biosynthesis via salvage pathway; L-methionine from S-methyl-5-thio-alpha-D-ribose 1-phosphate: step 1/6. In terms of biological role, catalyzes the interconversion of methylthioribose-1-phosphate (MTR-1-P) into methylthioribulose-1-phosphate (MTRu-1-P). This is Methylthioribose-1-phosphate isomerase from Thermus thermophilus (strain ATCC BAA-163 / DSM 7039 / HB27).